The primary structure comprises 443 residues: MISHEHPISIYWNDCSKSEQKKLLTRPINNKLNDIYINVKNILTKVYNEGDRALFKFNFDFDNVQTTQLQIPTEIIMNSGRNLSNEIKQAIHTAMTNITRFHQAQCYSEIIVETLPGVYCQQIIRPLNIVGLYVPGGTAPLLSTVMMLGVPARIAKCKRVILCSPPPIPDVIIYTAQLCGIDEIYQIGGSQSIAAMGFGTESIPKVDKIFGPGNIWVTEAKRQINLAPNGAAIDMLAGPSEILIIADNTANPIFIAADLLSQSEHGPDSHAILITPYSCIAEKTKKELHKQLKILPRNDIVRNVLLNSRMIITNNLMECFSISNSYAPEHLIIQIENASDYLHYITNAGSIFLGNWSPETAGDYASGPNHVLPTYGRAVATSGLGVIDFQKRMSVQQLTQNGLLQLSSTITTLTQIEQLKAHEYAITHRINYIKEQNEHSLLG.

NAD(+)-binding residues include Tyr-133, Gln-191, and Asn-214. 3 residues coordinate substrate: Ser-240, Gln-262, and His-265. Zn(2+) is bound by residues Gln-262 and His-265. Catalysis depends on proton acceptor residues Glu-329 and His-330. Residues His-330, Asp-363, Glu-417, and His-422 each contribute to the substrate site. Asp-363 provides a ligand contact to Zn(2+). His-422 lines the Zn(2+) pocket.

Belongs to the histidinol dehydrogenase family. As to quaternary structure, homodimer. Requires Zn(2+) as cofactor.

The catalysed reaction is L-histidinol + 2 NAD(+) + H2O = L-histidine + 2 NADH + 3 H(+). Its pathway is amino-acid biosynthesis; L-histidine biosynthesis; L-histidine from 5-phospho-alpha-D-ribose 1-diphosphate: step 9/9. Functionally, catalyzes the sequential NAD-dependent oxidations of L-histidinol to L-histidinaldehyde and then to L-histidine. This Blochmanniella pennsylvanica (strain BPEN) protein is Histidinol dehydrogenase.